The sequence spans 490 residues: GTPase Der (490 aa).

The 164-residue stretch at 3–166 (PVIALVGRPN…IALSEFPKDD (164 aa)) folds into the EngA-type G 1 domain. GTP contacts are provided by residues 9–16 (GRPNVGKS), 56–60 (DTGGI), and 118–121 (NKVD). Positions 164 to 191 (KDDADEPEEGEEEIVAEGEEAKRIPGPS) are disordered. Over residues 166–181 (DADEPEEGEEEIVAEG) the composition is skewed to acidic residues. Over residues 182 to 191 (EEAKRIPGPS) the composition is skewed to basic and acidic residues. An EngA-type G 2 domain is found at 196–369 (IKIAIIGRPN…SVQNSFKSAV (174 aa)). GTP is bound by residues 202 to 209 (GRPNVGKS), 249 to 253 (DTAGV), and 314 to 317 (NKWD). The 85-residue stretch at 370–454 (TRWPTSRLTQ…PIRIEFKGGE (85 aa)) folds into the KH-like domain. The interval 452 to 490 (GGENPYEGNKNTLTDRQVNKKRRLMSHHKKADKKRRDKR) is disordered. Residues 470-490 (NKKRRLMSHHKKADKKRRDKR) show a composition bias toward basic residues.

This sequence belongs to the TRAFAC class TrmE-Era-EngA-EngB-Septin-like GTPase superfamily. EngA (Der) GTPase family. In terms of assembly, associates with the 50S ribosomal subunit.

Its function is as follows. GTPase that plays an essential role in the late steps of ribosome biogenesis. The sequence is that of GTPase Der from Pseudomonas fluorescens (strain ATCC BAA-477 / NRRL B-23932 / Pf-5).